A 372-amino-acid chain; its full sequence is Alpha-parvin (372 aa).

Residues 1–31 are disordered; it reads MATSPQKSPLVPKSPTPKSPPSRKKDDSFLG. Residue Ala-2 is modified to N-acetylalanine. Phosphoserine is present on residues Ser-8, Ser-14, and Ser-19. The segment at 21–25 is interaction with ARHGAP31; sequence PSRKK. Ser-28 and Ser-62 each carry phosphoserine. Calponin-homology (CH) domains lie at 95–202 and 262–369; these read QELM…QYFR and NVVK…TKYR. A required for interaction with TESK1 and ILK region spans residues 223–372; that stretch reads GILQSRQIQE…NLFTKYRNVE (150 aa).

Belongs to the parvin family. As to quaternary structure, component of the heterotrimeric IPP (ILK-PINCH-PARVIN) complex composed of ILK, LIMS1/PINCH and PARVA; the complex binds to F-actin via the C-terminal tail of LIMS1 and the N-terminal region of PARVA, promoting F-actin filament bundling. Interacts with TGFB1I1. Interacts with ARHGAP31. Interacts with the actin cytoskeleton. Interacts (via C-terminus) with TESK1 (via C-terminus); the interaction inhibits TESK1 kinase activity. Interacts with PXN/PAXILLIN (via LD motif 4).

It is found in the cell junction. The protein resides in the focal adhesion. Its subcellular location is the cell membrane. It localises to the cytoplasm. The protein localises to the cytoskeleton. It is found in the myofibril. The protein resides in the sarcomere. Its subcellular location is the z line. Its function is as follows. Plays a role in sarcomere organization and in smooth muscle cell contraction. Required for normal development of the embryonic cardiovascular system, and for normal septation of the heart outflow tract. Plays a role in sprouting angiogenesis and is required for normal adhesion of vascular smooth muscle cells to endothelial cells during blood vessel development. Plays a role in the reorganization of the actin cytoskeleton, formation of lamellipodia and ciliogenesis. Plays a role in the establishment of cell polarity, cell adhesion, cell spreading, and directed cell migration. Within the IPP (ILK-PINCH-PARVIN) complex, binds to F-actin, promoting F-actin bundling, a process required to generate force for actin cytoskeleton reorganization and subsequent dynamic cell adhesion events such as cell spreading and migration. The chain is Alpha-parvin (Parva) from Mus musculus (Mouse).